We begin with the raw amino-acid sequence, 248 residues long: Phosphoribosyl isomerase A (248 aa).

The Proton acceptor role is filled by Asp14. The active-site Proton donor is the Asp133.

The protein belongs to the HisA/HisF family.

The protein resides in the cytoplasm. The enzyme catalyses 1-(5-phospho-beta-D-ribosyl)-5-[(5-phospho-beta-D-ribosylamino)methylideneamino]imidazole-4-carboxamide = 5-[(5-phospho-1-deoxy-D-ribulos-1-ylimino)methylamino]-1-(5-phospho-beta-D-ribosyl)imidazole-4-carboxamide. It catalyses the reaction N-(5-phospho-beta-D-ribosyl)anthranilate = 1-(2-carboxyphenylamino)-1-deoxy-D-ribulose 5-phosphate. It participates in amino-acid biosynthesis; L-histidine biosynthesis; L-histidine from 5-phospho-alpha-D-ribose 1-diphosphate: step 4/9. The protein operates within amino-acid biosynthesis; L-tryptophan biosynthesis; L-tryptophan from chorismate: step 3/5. In terms of biological role, involved in both the histidine and tryptophan biosynthetic pathways. The protein is Phosphoribosyl isomerase A of Mycobacterium sp. (strain JLS).